A 44-amino-acid polypeptide reads, in one-letter code: Conotoxin Fi11.11 (44 aa).

Disulfide bonds link Cys1-Cys15, Cys8-Cys20, Cys14-Cys24, and Cys19-Cys28. Position 30 is an asparagine amide (Asn30). Positions 35–44 (QVPLKSFGQR) are excised as a propeptide.

It belongs to the conotoxin I2 superfamily. Expressed by the venom duct.

It is found in the secreted. This Conus figulinus (Fig cone) protein is Conotoxin Fi11.11.